Here is a 369-residue protein sequence, read N- to C-terminus: Superinfection exclusion protein (369 aa).

The first 15 residues, 1 to 15 (MIALLILSLTCSVST), serve as a signal peptide directing secretion.

It belongs to the serpin family. Orthopoxvirus OPG040 subfamily. As to quaternary structure, interacts with OPG185/A56 protein.

It localises to the virion membrane. It is found in the host cell membrane. In terms of biological role, negatively regulates superinfection and syncytium formation in infected host cells. Acts in concert with OPG185/A56 protein at the host cell membrane by interacting with and inhibiting the mature virion entry/fusion complex (EFC). This mechanism ensures that new virions released from the cell cannot enter already infected cells. The chain is Superinfection exclusion protein (OPG040) from Vaccinia virus (strain Western Reserve) (VACV).